The sequence spans 193 residues: Potassium-transporting ATPase KdpC subunit (193 aa).

A helical membrane pass occupies residues 7-27; the sequence is PLVVIFVVLTAVTGLAYPAVM.

It belongs to the KdpC family. The system is composed of three essential subunits: KdpA, KdpB and KdpC.

It is found in the cell inner membrane. Its function is as follows. Part of the high-affinity ATP-driven potassium transport (or Kdp) system, which catalyzes the hydrolysis of ATP coupled with the electrogenic transport of potassium into the cytoplasm. This subunit acts as a catalytic chaperone that increases the ATP-binding affinity of the ATP-hydrolyzing subunit KdpB by the formation of a transient KdpB/KdpC/ATP ternary complex. The protein is Potassium-transporting ATPase KdpC subunit of Burkholderia ambifaria (strain ATCC BAA-244 / DSM 16087 / CCUG 44356 / LMG 19182 / AMMD) (Burkholderia cepacia (strain AMMD)).